The sequence spans 345 residues: Dihydroorotase (345 aa).

Positions 14 and 16 each coordinate Zn(2+). Substrate is bound by residues 16–18 (HLR) and Asn42. Zn(2+) is bound by residues Lys100, His137, and His175. N6-carboxylysine is present on Lys100. His137 is a binding site for substrate. Leu220 provides a ligand contact to substrate. Residue Asp248 coordinates Zn(2+). The active site involves Asp248. Substrate is bound by residues His252 and Ala264.

It belongs to the metallo-dependent hydrolases superfamily. DHOase family. Class II DHOase subfamily. In terms of assembly, homodimer. Requires Zn(2+) as cofactor.

The catalysed reaction is (S)-dihydroorotate + H2O = N-carbamoyl-L-aspartate + H(+). It functions in the pathway pyrimidine metabolism; UMP biosynthesis via de novo pathway; (S)-dihydroorotate from bicarbonate: step 3/3. Its function is as follows. Catalyzes the reversible cyclization of carbamoyl aspartate to dihydroorotate. This chain is Dihydroorotase, found in Nitrosococcus oceani (strain ATCC 19707 / BCRC 17464 / JCM 30415 / NCIMB 11848 / C-107).